The chain runs to 748 residues: Catalase-peroxidase (748 aa).

Positions 91–236 form a cross-link, tryptophyl-tyrosyl-methioninium (Trp-Tyr) (with M-262); it reads WHSAGTYRVG…LAAVQMGLIY (146 aa). The Proton acceptor role is filled by H92. The tract at residues 201–223 is disordered; the sequence is AQPVADKAGHGKEHGRTDGGRNL. Residues 207–221 are compositionally biased toward basic and acidic residues; the sequence is KAGHGKEHGRTDGGR. Residues 236–262 constitute a cross-link (tryptophyl-tyrosyl-methioninium (Tyr-Met) (with W-91)); it reads YVNPEGPDGNPDPQASAHDIRETFARM. Heme b is bound at residue H277.

It belongs to the peroxidase family. Peroxidase/catalase subfamily. Homodimer or homotetramer. Heme b is required as a cofactor. In terms of processing, formation of the three residue Trp-Tyr-Met cross-link is important for the catalase, but not the peroxidase activity of the enzyme.

The enzyme catalyses H2O2 + AH2 = A + 2 H2O. It catalyses the reaction 2 H2O2 = O2 + 2 H2O. Bifunctional enzyme with both catalase and broad-spectrum peroxidase activity. This is Catalase-peroxidase from Bordetella avium (strain 197N).